We begin with the raw amino-acid sequence, 89 residues long: Small ribosomal subunit protein bS20 (89 aa).

Positions 1–26 (MANSPQAKKRARQNEKNRKHNASLRS) are disordered. Residues 7 to 22 (AKKRARQNEKNRKHNA) are compositionally biased toward basic residues.

The protein belongs to the bacterial ribosomal protein bS20 family.

Its function is as follows. Binds directly to 16S ribosomal RNA. This Marinobacter nauticus (strain ATCC 700491 / DSM 11845 / VT8) (Marinobacter aquaeolei) protein is Small ribosomal subunit protein bS20.